The following is a 224-amino-acid chain: Metalloproteinase inhibitor 4 (224 aa).

A signal peptide spans 1–29; that stretch reads MPGSPRPAPSWVLLLRLLALLRPPGLGEA. Zn(2+) is bound at residue cysteine 30. Involved in metalloproteinase-binding regions lie at residues 30 to 33 and 99 to 100; these read CSCA and SS. 6 disulfide bridges follow: cysteine 30–cysteine 102, cysteine 32–cysteine 131, cysteine 42–cysteine 156, cysteine 158–cysteine 205, cysteine 163–cysteine 168, and cysteine 176–cysteine 197. The region spanning 30 to 156 is the NTR domain; it reads CSCAPAHPQQ…SLNHHYHLNC (127 aa).

It belongs to the protease inhibitor I35 (TIMP) family. In terms of tissue distribution, abundant in heart and present at low levels in many other tissues.

It is found in the secreted. Functionally, complexes with metalloproteinases (such as collagenases) and irreversibly inactivates them by binding to their catalytic zinc cofactor. Known to act on MMP-1, MMP-2, MMP-3, MMP-7 and MMP-9. The protein is Metalloproteinase inhibitor 4 (TIMP4) of Homo sapiens (Human).